The following is a 451-amino-acid chain: F-box/LRR-repeat protein 13 (451 aa).

One can recognise an F-box domain in the interval 17–70 (VDWISKLPDCLLCEVLLNLPTKDVVKTSVLSRRWRNLWKHVPGLDLDNTDFQEF). LRR repeat units follow at residues 128–155 (DDSY…KLCG), 177–202 (TKFA…TIER), 224–251 (VADS…RLSD), and 335–363 (CVEF…VVKS). Residues 370 to 421 (GENIILPGPRRFLSSLEYVKIERPLKGEAMEMKLVSYLLENSTILKKLTLCL) form the FBD domain.

This Arabidopsis thaliana (Mouse-ear cress) protein is F-box/LRR-repeat protein 13 (FBL13).